A 404-amino-acid chain; its full sequence is CD2 homolog (404 aa).

The first 16 residues, 1–16, serve as a signal peptide directing secretion; that stretch reads MFITLIFLSYINIVLS. The Extracellular portion of the chain corresponds to 17-225; that stretch reads NNYWARLNET…QNYFLENIHT (209 aa). N-linked (GlcNAc...) asparagine; by host glycans are attached at residues asparagine 24, asparagine 87, asparagine 92, asparagine 96, asparagine 122, asparagine 139, asparagine 167, asparagine 193, asparagine 200, and asparagine 206. 2 disulfide bridges follow: cysteine 140-cysteine 207 and cysteine 147-cysteine 190. A helical transmembrane segment spans residues 226-246; sequence LFYIIIFIVSGLIASIFISII. At 247-404 the chain is on the cytoplasmic side; the sequence is TFLSLRKRKK…ISLIHVDRII (158 aa). Positions 260 to 295 are disordered; it reads EIESPPPESNEEEQCQHDDTTSIHEPSPREPLLPKP. Residues 273–287 are compositionally biased toward basic and acidic residues; the sequence is QCQHDDTTSIHEPSP. Tandem repeats lie at residues 322 to 327, 328 to 333, 334 to 339, 340 to 345, 346 to 351, 352 to 357, and 358 to 363. Residues 322 to 363 are 7 X 6 AA tandem repeats of [KN]-P-C-P-P-P; sequence NPCPPPKPCPPPKPCPPPKPCPPPKPCPPPKPCPPPKPCPPP. The segment covering 357–388 has biased composition (pro residues); it reads PKPCPPPKPCSSPESYSPPKPLPSIPLLPNIP. Residues 357–390 form a disordered region; the sequence is PKPCPPPKPCSSPESYSPPKPLPSIPLLPNIPPL.

It belongs to the asfivirus CD2 homolog protein family. Both glycosylated and nonglycosylated forms interact (via C-terminus) with the host AP-1 complex. Cleaved into two fragments of 63 kDa and 26 kDa containing respectively the glycosylated N-terminus and the nonglycosylated C-terminus. A full-length 89-kDa glycosylated form also exists.

The protein resides in the host membrane. The protein localises to the virion membrane. It is found in the host Golgi apparatus. In terms of biological role, may play an immunosuppressive role by inhibiting lymphocyte proliferation and subsequently facilitating viral replication and generalization of infection. Responsible for viral hemadsorption, which may help viral spread. Increases virus replication in the tick vector at the step of virus uptake or replication in the tick gut. May play a role in the host Golgi reorganization to yield viral factories. May play a role in host cell penetration. The sequence is that of CD2 homolog from African swine fever virus (isolate Tick/South Africa/Pretoriuskop Pr4/1996) (ASFV).